A 564-amino-acid polypeptide reads, in one-letter code: Hexose transporter HXT17 (564 aa).

Over residues 1–12 (MQSSTESDRDIQ) the composition is skewed to basic and acidic residues. Residues 1–22 (MQSSTESDRDIQDGPDADIHVA) are disordered. The Cytoplasmic segment spans residues 1–52 (MQSSTESDRDIQDGPDADIHVAPPVEKEWSDGFDDNEVINGDNVEPPKRGLI). Residues 53-73 (GYLVIYLLCYPISFGGFLPGW) traverse the membrane as a helical segment. Residues 74–109 (DSGITAGFINMDNFKMNFGSYKHSTGEYYLSNVRMG) are Extracellular-facing. A helical membrane pass occupies residues 110–130 (LLVAMFSIGCAIGGLIFARLA). The Cytoplasmic segment spans residues 131 to 136 (DTLGRR). Residues 137–157 (LAIVIVVLVYMVGAIIQISSN) traverse the membrane as a helical segment. Residues 158-167 (HKWYQYFVGK) are Extracellular-facing. The chain crosses the membrane as a helical span at residues 168-188 (IIYGLGAGGCSVLCPMLLSEI). Topologically, residues 189 to 194 (APTDLR) are cytoplasmic. A helical membrane pass occupies residues 195–215 (GGLVSLYQLNMTFGIFLGYCS). The Extracellular segment spans residues 216-229 (VYGTRKYDNTAQWR). Residues 230–250 (VPLGLCFLWTLIIIIGMLLVP) traverse the membrane as a helical segment. At 251–333 (ESPRYLIECE…VQTFLQLTGE (83 aa)) the chain is on the cytoplasmic side. The chain crosses the membrane as a helical span at residues 334–350 (NYFFFYGTTIFKSVGLT). Topologically, residues 351–356 (DGFETS) are extracellular. The helical transmembrane segment at 357 to 374 (IVLGTVNFFSTIIAVMVV) threads the bilayer. At 375–381 (DKIGRRK) the chain is on the cytoplasmic side. The chain crosses the membrane as a helical span at residues 382–402 (CLLFGAAGMMACMVIFASIGV). At 403-424 (KCLYPHGQDGPSSKGAGNAMIV) the chain is on the extracellular side. A helical transmembrane segment spans residues 425–445 (FTCFYIFCFATTWAPVAYIVV). Residues 446–462 (AESFPSKVKSRAMSIST) lie on the Cytoplasmic side of the membrane. The helical transmembrane segment at 463–483 (ACNWLWQFLIGFFTPFITGSI) threads the bilayer. Residue H484 is a topological domain, extracellular. Residues 485-505 (FYYGYVFVGCLVAMFLYVFFF) traverse the membrane as a helical segment. Topologically, residues 506–564 (LPETIGLSLEEIQLLYEEGIKPWKSASWVPPSRRGIPSEESKTEKKDWKKFLKFSKGSD) are cytoplasmic.

This sequence belongs to the major facilitator superfamily. Sugar transporter (TC 2.A.1.1) family.

The protein resides in the membrane. Probable glucose transporter. This Saccharomyces cerevisiae (strain ATCC 204508 / S288c) (Baker's yeast) protein is Hexose transporter HXT17 (HXT17).